Here is a 387-residue protein sequence, read N- to C-terminus: S-adenosylmethionine synthase (387 aa).

His17 provides a ligand contact to ATP. Asp19 is a Mg(2+) binding site. Glu45 provides a ligand contact to K(+). The L-methionine site is built by Glu58 and Gln101. The flexible loop stretch occupies residues 101–111; it reads QSADIAMGVDA. ATP is bound by residues 166–168, 231–232, Asp240, 246–247, Ala263, and Lys267; these read DAK, RF, and RK. Residue Asp240 participates in L-methionine binding. Lys271 serves as a coordination point for L-methionine.

It belongs to the AdoMet synthase family. In terms of assembly, homotetramer; dimer of dimers. Requires Mg(2+) as cofactor. K(+) is required as a cofactor.

Its subcellular location is the cytoplasm. The catalysed reaction is L-methionine + ATP + H2O = S-adenosyl-L-methionine + phosphate + diphosphate. It functions in the pathway amino-acid biosynthesis; S-adenosyl-L-methionine biosynthesis; S-adenosyl-L-methionine from L-methionine: step 1/1. Functionally, catalyzes the formation of S-adenosylmethionine (AdoMet) from methionine and ATP. The overall synthetic reaction is composed of two sequential steps, AdoMet formation and the subsequent tripolyphosphate hydrolysis which occurs prior to release of AdoMet from the enzyme. The chain is S-adenosylmethionine synthase from Rhodospirillum centenum (strain ATCC 51521 / SW).